Consider the following 547-residue polypeptide: Ganoderic acid synthetase CYP5150L8 (547 aa).

The chain crosses the membrane as a helical span at residues 2–22 (PDSSLVLVAIAGAAYIFWLVF). Residue Cys487 coordinates heme.

Belongs to the cytochrome P450 family. The cofactor is heme.

The protein resides in the membrane. It catalyses the reaction lanosterol + reduced [NADPH--hemoprotein reductase] + O2 = 26-hydroxylanosterol + oxidized [NADPH--hemoprotein reductase] + H2O + H(+). The enzyme catalyses 26-hydroxylanosterol + reduced [NADPH--hemoprotein reductase] + O2 = 26-oxolanosterol + oxidized [NADPH--hemoprotein reductase] + 2 H2O + H(+). It carries out the reaction 26-oxolanosterol + reduced [NADPH--hemoprotein reductase] + O2 = 3beta-hydroxy-lanosta-8, 24-dien-26-oate + oxidized [NADPH--hemoprotein reductase] + H2O + 2 H(+). It functions in the pathway secondary metabolite biosynthesis; terpenoid biosynthesis. Functionally, cytochrome P450 monooxygenase that is involved in the biosynthesis of ganoderic acids (GA), a group of highly oxygenated lanostane-type triterpenoids which well recognized as a main group of unique bioactive compounds in the medicinal mushroom Ganoderma lucidum. CYP5150L8 alone is able to catalyze the three-step oxidations at C-26 from lanosterol to 3-hydroxy-lanosta-8,24-dien-26-oic acid (also called ganoderic acid Z or HLDOA). The methyl group of lanosterol at C-26 is first oxidized into hydroxyl group to form 3-hydroxy-lanosta-8,24-dien-26-ol (HLDO). The hydroxyl group at C-26 of HLDO is further converted into a formyl group to form 3-hydroxy-lanosta-8,24-dien-26-al (HLDA). Finally, the formyl group is oxidized into a carboxyl group to produce 3-hydroxy-lanosta-8,24-dien-26-oic acid (HLDOA). The polypeptide is Ganoderic acid synthetase CYP5150L8 (Ganoderma lucidum (Ling zhi medicinal fungus)).